The chain runs to 1097 residues: DNA-directed RNA polymerase subunit beta (1097 aa).

Residues 1072-1097 (QDINPRRNTPSRPTYESLGTSEYEED) are disordered. The span at 1077–1091 (RRNTPSRPTYESLGT) shows a compositional bias: polar residues.

Belongs to the RNA polymerase beta chain family. In terms of assembly, in cyanobacteria the RNAP catalytic core is composed of 2 alpha, 1 beta, 1 beta', 1 gamma and 1 omega subunit. When a sigma factor is associated with the core the holoenzyme is formed, which can initiate transcription.

It carries out the reaction RNA(n) + a ribonucleoside 5'-triphosphate = RNA(n+1) + diphosphate. In terms of biological role, DNA-dependent RNA polymerase catalyzes the transcription of DNA into RNA using the four ribonucleoside triphosphates as substrates. This Prochlorococcus marinus (strain AS9601) protein is DNA-directed RNA polymerase subunit beta.